The primary structure comprises 78 residues: UPF0291 protein SE_1024 (78 aa).

Positions 53–78 (TKVIDPEGNDVTPEKLKKIQEEKHNK) are disordered. Basic and acidic residues predominate over residues 64-78 (TPEKLKKIQEEKHNK).

This sequence belongs to the UPF0291 family.

It localises to the cytoplasm. The chain is UPF0291 protein SE_1024 from Staphylococcus epidermidis (strain ATCC 12228 / FDA PCI 1200).